Reading from the N-terminus, the 691-residue chain is Glycine--tRNA ligase beta subunit (691 aa).

Belongs to the class-II aminoacyl-tRNA synthetase family. Tetramer of two alpha and two beta subunits.

The protein localises to the cytoplasm. The enzyme catalyses tRNA(Gly) + glycine + ATP = glycyl-tRNA(Gly) + AMP + diphosphate. The sequence is that of Glycine--tRNA ligase beta subunit from Levilactobacillus brevis (strain ATCC 367 / BCRC 12310 / CIP 105137 / JCM 1170 / LMG 11437 / NCIMB 947 / NCTC 947) (Lactobacillus brevis).